The primary structure comprises 217 residues: MTVALALRDGCRRISTMTRQYGVTTQRHLISPVVFDITPLGRRPGAIIALQKTVPSLARIGLELVVIEWGAPINLDLRVESVSEDVLVAGTVTAPTVSECVRCLTAVHGHVQVTLNQLFAYPYSATKVTTEEDAVGHVVDGTIDLEQSIIDAVGIELPFAPMCRSDCPGLCAECGTSLVVEPGHPHDRIDPWWAKLTDMLAPDVPQTSETDGSRSEW.

To M.tuberculosis Rv2926c.

This is an uncharacterized protein from Mycobacterium leprae (strain TN).